Consider the following 441-residue polypeptide: Zinc finger and BTB domain-containing protein 26 (441 aa).

The BTB domain maps to 33-97; it reads CDVTVLIDDI…CYSGVLEFPE (65 aa). Residues 134 to 177 form a disordered region; the sequence is DSKEGCEPQSASPQSKEQQGDARGSPKQDSPCIHPSEDSMDMED. Lys184 is covalently cross-linked (Glycyl lysine isopeptide (Lys-Gly) (interchain with G-Cter in SUMO2)). The disordered stretch occupies residues 194-216; sequence VRSKKDQNQFISSEPTALHSSEP. Positions 201–216 are enriched in polar residues; the sequence is NQFISSEPTALHSSEP. Residue Lys255 forms a Glycyl lysine isopeptide (Lys-Gly) (interchain with G-Cter in SUMO2) linkage. 4 consecutive C2H2-type zinc fingers follow at residues 273–295, 298–320, 326–348, and 354–377; these read HQCP…LKMH, FMCL…MRVH, FQCK…LNLH, and HKCN…KQLH. Lys329 is covalently cross-linked (Glycyl lysine isopeptide (Lys-Gly) (interchain with G-Cter in SUMO2)).

Ubiquitous.

The protein localises to the nucleus. Its function is as follows. May be involved in transcriptional regulation. The chain is Zinc finger and BTB domain-containing protein 26 (ZBTB26) from Homo sapiens (Human).